A 105-amino-acid chain; its full sequence is Large ribosomal subunit protein uL24 (105 aa).

This sequence belongs to the universal ribosomal protein uL24 family. Part of the 50S ribosomal subunit.

In terms of biological role, one of two assembly initiator proteins, it binds directly to the 5'-end of the 23S rRNA, where it nucleates assembly of the 50S subunit. Its function is as follows. One of the proteins that surrounds the polypeptide exit tunnel on the outside of the subunit. The sequence is that of Large ribosomal subunit protein uL24 from Novosphingobium aromaticivorans (strain ATCC 700278 / DSM 12444 / CCUG 56034 / CIP 105152 / NBRC 16084 / F199).